The primary structure comprises 162 residues: ATP synthase subunit b', chloroplastic (162 aa).

Residues 26 to 46 form a helical membrane-spanning segment; that stretch reads ATLPLQALQFILLTVLLTFIF.

Belongs to the ATPase B chain family. In terms of assembly, F-type ATPases have 2 components, F(1) - the catalytic core - and F(0) - the membrane proton channel. F(1) has five subunits: alpha(3), beta(3), gamma(1), delta(1), epsilon(1). F(0) has four main subunits: a(1), b(1), b'(1) and c(10-14). The alpha and beta chains form an alternating ring which encloses part of the gamma chain. F(1) is attached to F(0) by a central stalk formed by the gamma and epsilon chains, while a peripheral stalk is formed by the delta, b and b' chains.

It localises to the plastid. Its subcellular location is the chloroplast thylakoid membrane. In terms of biological role, f(1)F(0) ATP synthase produces ATP from ADP in the presence of a proton or sodium gradient. F-type ATPases consist of two structural domains, F(1) containing the extramembraneous catalytic core and F(0) containing the membrane proton channel, linked together by a central stalk and a peripheral stalk. During catalysis, ATP synthesis in the catalytic domain of F(1) is coupled via a rotary mechanism of the central stalk subunits to proton translocation. Its function is as follows. Component of the F(0) channel, it forms part of the peripheral stalk, linking F(1) to F(0). The b'-subunit is a diverged and duplicated form of b found in plants and photosynthetic bacteria. The polypeptide is ATP synthase subunit b', chloroplastic (Emiliania huxleyi (Coccolithophore)).